Consider the following 345-residue polypeptide: uncharacterized protein (345 aa).

Residues 1–98 (MNDEMKGKSG…ISGKSFIDPE (98 aa)) form a disordered region. Composition is skewed to basic and acidic residues over residues 18–27 (RSDDDSDKRT), 42–68 (SRAD…EDSP), and 76–86 (PGDETPEKADH).

Belongs to the class IV-like SAM-binding methyltransferase superfamily. RNA methyltransferase TrmH family.

This is an uncharacterized protein from Escherichia coli O157:H7.